Reading from the N-terminus, the 240-residue chain is BLOC-1-related complex subunit 8 homolog (240 aa).

Disordered regions lie at residues 1–33 and 163–240; these read MSSI…GSHG and KTFS…EKIN. 2 stretches are compositionally biased toward low complexity: residues 7 to 26 and 163 to 179; these read SSTG…NNIS and KTFS…QQQQ. The segment covering 180–190 has biased composition (polar residues); sequence TNLTPSKPTLS. Over residues 196–205 the composition is skewed to low complexity; sequence DNNNNNNNLN. The segment covering 208–240 has biased composition (basic and acidic residues); sequence EKIEKEEKIEKEDEGKEKDEKEKDDKDLNEKIN. Positions 211-239 form a coiled coil; the sequence is EKEEKIEKEDEGKEKDEKEKDDKDLNEKI.

Belongs to the BORCS8 family.

It is found in the lysosome membrane. In terms of biological role, may participate in the coupling of lysosomes to microtubule plus-end-directed kinesin motor. This Dictyostelium discoideum (Social amoeba) protein is BLOC-1-related complex subunit 8 homolog.